We begin with the raw amino-acid sequence, 148 residues long: Hemoglobin subunit beta-B (148 aa).

Residues 3-148 (DWTDAERAAI…VVSALGRQYH (146 aa)) form the Globin domain. Positions 64 and 93 each coordinate heme b.

This sequence belongs to the globin family. In terms of assembly, heterotetramer of two alpha chains and two beta chains. Red blood cells.

Its function is as follows. Involved in oxygen transport from gills to the various peripheral tissues. The chain is Hemoglobin subunit beta-B (hbb2) from Seriola quinqueradiata (Five-ray yellowtail).